The chain runs to 208 residues: Large ribosomal subunit protein uL4 (208 aa).

The tract at residues 45–96 is disordered; the sequence is RQGTHKSKTRAEVRGGGRKPYRQKGTGNARQGSTRSPLMVGGGTIFGPTPHG. Residues 69–80 are compositionally biased toward polar residues; it reads GTGNARQGSTRS.

The protein belongs to the universal ribosomal protein uL4 family. In terms of assembly, part of the 50S ribosomal subunit.

Functionally, one of the primary rRNA binding proteins, this protein initially binds near the 5'-end of the 23S rRNA. It is important during the early stages of 50S assembly. It makes multiple contacts with different domains of the 23S rRNA in the assembled 50S subunit and ribosome. In terms of biological role, forms part of the polypeptide exit tunnel. This is Large ribosomal subunit protein uL4 from Chlorobium phaeovibrioides (strain DSM 265 / 1930) (Prosthecochloris vibrioformis (strain DSM 265)).